The primary structure comprises 427 residues: Probable G-protein coupled receptor 150 (427 aa).

Over methionine 1 to aspartate 3 the chain is Extracellular. A helical transmembrane segment spans residues proline 4–tryptophan 24. At serine 25–arginine 50 the chain is on the cytoplasmic side. Residues isoleucine 51–leucine 71 form a helical membrane-spanning segment. The Extracellular segment spans residues cysteine 72 to lysine 89. The helical transmembrane segment at methionine 90 to leucine 110 threads the bilayer. The Cytoplasmic segment spans residues serine 111–arginine 170. A helical transmembrane segment spans residues alanine 171–valine 191. The Extracellular segment spans residues arginine 192 to alanine 230. Residues isoleucine 231–valine 251 form a helical membrane-spanning segment. Over tryptophan 252–serine 286 the chain is Cytoplasmic. Residues leucine 287–alanine 307 traverse the membrane as a helical segment. Residues arginine 308–valine 327 lie on the Extracellular side of the membrane. The chain crosses the membrane as a helical span at residues alanine 328 to phenylalanine 348. At glutamine 349–phenylalanine 427 the chain is on the cytoplasmic side. Residues glutamate 402 to phenylalanine 427 are disordered. A compositionally biased stretch (pro residues) spans arginine 410–cysteine 421.

This sequence belongs to the G-protein coupled receptor 1 family.

It is found in the cell membrane. Functionally, orphan receptor. In Mus musculus (Mouse), this protein is Probable G-protein coupled receptor 150 (Gpr150).